The following is a 449-amino-acid chain: Exodeoxyribonuclease 7 large subunit (449 aa).

It belongs to the XseA family. As to quaternary structure, heterooligomer composed of large and small subunits.

It is found in the cytoplasm. The catalysed reaction is Exonucleolytic cleavage in either 5'- to 3'- or 3'- to 5'-direction to yield nucleoside 5'-phosphates.. In terms of biological role, bidirectionally degrades single-stranded DNA into large acid-insoluble oligonucleotides, which are then degraded further into small acid-soluble oligonucleotides. This chain is Exodeoxyribonuclease 7 large subunit, found in Salmonella newport (strain SL254).